The sequence spans 280 residues: Succinate dehydrogenase [ubiquinone] iron-sulfur subunit, mitochondrial (280 aa).

The N-terminal 28 residues, 1–28 (MAAVVALSLRRRFPAAALGGARLQACRG), are a transit peptide targeting the mitochondrion. The 94-residue stretch at 40-133 (KKFAIYRWDP…VSKIYPLPHM (94 aa)) folds into the 2Fe-2S ferredoxin-type domain. N6-acetyllysine occurs at positions 51 and 55. [2Fe-2S] cluster contacts are provided by Cys-93, Cys-98, Cys-101, and Cys-113. The segment at 146–218 (FYAQYKSIEP…PAVLMQAYRW (73 aa)) is interaction with SDHAF1. One can recognise a 4Fe-4S ferredoxin-type domain in the interval 176–206 (DREKLDGLYECILCACCSTSCPSYWWNGDKY). [4Fe-4S] cluster-binding residues include Cys-186, Cys-189, and Cys-192. Cys-196 provides a ligand contact to [3Fe-4S] cluster. Trp-201 lines the a ubiquinone pocket. Residues Cys-243 and Cys-249 each contribute to the [3Fe-4S] cluster site. Residue Cys-253 participates in [4Fe-4S] cluster binding.

It belongs to the succinate dehydrogenase/fumarate reductase iron-sulfur protein family. Component of complex II composed of four subunits: the flavoprotein (FP) SDHA, iron-sulfur protein (IP) SDHB, and a cytochrome b560 composed of SDHC and SDHD. Interacts with SDHAF1; the interaction is required for iron-sulfur cluster incorporation into SDHB. Requires [2Fe-2S] cluster as cofactor. [3Fe-4S] cluster is required as a cofactor. [4Fe-4S] cluster serves as cofactor.

It localises to the mitochondrion inner membrane. The catalysed reaction is a quinone + succinate = fumarate + a quinol. It catalyses the reaction (R)-malate + a quinone = enol-oxaloacetate + a quinol. It carries out the reaction (S)-malate + a quinone = enol-oxaloacetate + a quinol. It participates in carbohydrate metabolism; tricarboxylic acid cycle; fumarate from succinate (eukaryal route): step 1/1. With respect to regulation, enol-oxaloacetate inhibits the succinate dehydrogenase activity. Its function is as follows. Iron-sulfur protein (IP) subunit of the succinate dehydrogenase complex (mitochondrial respiratory chain complex II), responsible for transferring electrons from succinate to ubiquinone (coenzyme Q). SDH also oxidizes malate to the non-canonical enol form of oxaloacetate, enol-oxaloacetate. Enol-oxaloacetate, which is a potent inhibitor of the succinate dehydrogenase activity, is further isomerized into keto-oxaloacetate. The protein is Succinate dehydrogenase [ubiquinone] iron-sulfur subunit, mitochondrial (SDHB) of Bos taurus (Bovine).